A 187-amino-acid chain; its full sequence is Cell division protein SepF (187 aa).

Residues 13–74 (GLAEDDRYAE…PAPATTAQVT (62 aa)) are disordered. Basic and acidic residues predominate over residues 16–65 (EDDRYAEDTEPETTRPRVEAAREVRVESRHEARPEVRHEPRPEVSVERRP).

Belongs to the SepF family. In terms of assembly, homodimer. Interacts with FtsZ.

Its subcellular location is the cytoplasm. Its function is as follows. Cell division protein that is part of the divisome complex and is recruited early to the Z-ring. Probably stimulates Z-ring formation, perhaps through the cross-linking of FtsZ protofilaments. Its function overlaps with FtsA. This is Cell division protein SepF from Kineococcus radiotolerans (strain ATCC BAA-149 / DSM 14245 / SRS30216).